The primary structure comprises 285 residues: Large ribosomal subunit protein uL2 (285 aa).

The disordered stretch occupies residues 215 to 285 (GRSRHKGIRP…IIRNRKGEQY (71 aa)). Residues 256-272 (WGKRHMGVKTRNMKKHS) are compositionally biased toward basic residues.

It belongs to the universal ribosomal protein uL2 family. As to quaternary structure, part of the 50S ribosomal subunit. Forms a bridge to the 30S subunit in the 70S ribosome.

One of the primary rRNA binding proteins. Required for association of the 30S and 50S subunits to form the 70S ribosome, for tRNA binding and peptide bond formation. It has been suggested to have peptidyltransferase activity; this is somewhat controversial. Makes several contacts with the 16S rRNA in the 70S ribosome. This is Large ribosomal subunit protein uL2 from Mycoplasma genitalium (strain ATCC 33530 / DSM 19775 / NCTC 10195 / G37) (Mycoplasmoides genitalium).